The sequence spans 549 residues: Probable glucuronosyltransferase Os01g0157700 (549 aa).

Residues 1–16 are Cytoplasmic-facing; it reads MDSEERSKKRLRLWSR. The chain crosses the membrane as a helical; Signal-anchor for type II membrane protein span at residues 17-37; the sequence is AVVHFSLCFAIGVFAALLPLA. Residues 38–549 lie on the Lumenal side of the membrane; it reads ATGATSIDSI…TPEEGKTKEG (512 aa). Asparagine 112, asparagine 139, asparagine 214, asparagine 229, asparagine 240, asparagine 251, asparagine 264, asparagine 269, and asparagine 300 each carry an N-linked (GlcNAc...) asparagine glycan. The disordered stretch occupies residues 232 to 252; sequence ETTWDSSSNTTQTTWDSSSNK. The segment covering 350–363 has biased composition (basic and acidic residues); sequence IEQATPEKESLTKG. Disordered stretches follow at residues 350 to 371, 413 to 432, and 441 to 524; these read IEQA…SHDM, EQET…ESHD, and KIEE…KETH. Asparagine 421 and asparagine 452 each carry an N-linked (GlcNAc...) asparagine glycan. Basic and acidic residues-rich tracts occupy residues 441 to 465, 472 to 496, and 503 to 524; these read KIEE…HDMM, KIDE…HDMM, and KIEE…KETH.

This sequence belongs to the glycosyltransferase 43 family.

Its subcellular location is the golgi apparatus membrane. Involved in the synthesis of glucuronoxylan hemicellulose in secondary cell walls. The chain is Probable glucuronosyltransferase Os01g0157700 from Oryza sativa subsp. japonica (Rice).